The following is a 500-amino-acid chain: L-arabinose isomerase (500 aa).

Mn(2+) contacts are provided by Glu306, Glu333, His350, and His450.

This sequence belongs to the arabinose isomerase family. Homohexamer. Requires Mn(2+) as cofactor.

The catalysed reaction is beta-L-arabinopyranose = L-ribulose. It participates in carbohydrate degradation; L-arabinose degradation via L-ribulose; D-xylulose 5-phosphate from L-arabinose (bacterial route): step 1/3. Functionally, catalyzes the conversion of L-arabinose to L-ribulose. This chain is L-arabinose isomerase, found in Salmonella typhi.